The chain runs to 240 residues: Ribosomal RNA large subunit methyltransferase E (240 aa).

Residues 1-20 (MSKAGGNKGGVKTGGRGGAG) are compositionally biased toward gly residues. The segment at 1–27 (MSKAGGNKGGVKTGGRGGAGSSNLQVR) is disordered. S-adenosyl-L-methionine-binding residues include Gly92, Trp94, Asp115, Asp131, and Asp155. Lys195 functions as the Proton acceptor in the catalytic mechanism.

The protein belongs to the class I-like SAM-binding methyltransferase superfamily. RNA methyltransferase RlmE family.

Its subcellular location is the cytoplasm. It carries out the reaction uridine(2552) in 23S rRNA + S-adenosyl-L-methionine = 2'-O-methyluridine(2552) in 23S rRNA + S-adenosyl-L-homocysteine + H(+). In terms of biological role, specifically methylates the uridine in position 2552 of 23S rRNA at the 2'-O position of the ribose in the fully assembled 50S ribosomal subunit. This chain is Ribosomal RNA large subunit methyltransferase E, found in Brucella anthropi (strain ATCC 49188 / DSM 6882 / CCUG 24695 / JCM 21032 / LMG 3331 / NBRC 15819 / NCTC 12168 / Alc 37) (Ochrobactrum anthropi).